The primary structure comprises 342 residues: 4-hydroxy-2-oxovalerate aldolase 2 (342 aa).

Positions 8–260 (ITVHDMTLRD…ETGVDVFKIQ (253 aa)) constitute a Pyruvate carboxyltransferase domain. 16–17 (RD) is a substrate binding site. Asp-17 contacts Mn(2+). Catalysis depends on His-20, which acts as the Proton acceptor. Residues Ser-170 and His-199 each coordinate substrate. The Mn(2+) site is built by His-199 and His-201. Tyr-290 contacts substrate.

Belongs to the 4-hydroxy-2-oxovalerate aldolase family.

The catalysed reaction is (S)-4-hydroxy-2-oxopentanoate = acetaldehyde + pyruvate. The protein is 4-hydroxy-2-oxovalerate aldolase 2 (mhpE) of Azoarcus sp. (strain BH72).